We begin with the raw amino-acid sequence, 325 residues long: Envelope protein H3 (325 aa).

The Virion surface segment spans residues 1 to 285 (MATVNKTPVI…FTTPLISFFG (285 aa)). Residues 286–306 (LFDINVIGLIVILFIMFMLIF) traverse the membrane as a helical; Signal-anchor segment. The Intravirion segment spans residues 307-325 (NVKSKLLWFLTGTFVTAFI).

The protein belongs to the orthopoxvirus OPG108 family. Post-translationally, does not contain disulfide bonds.

It localises to the virion membrane. Envelope protein that binds to heparan sulfate on the cell surface and might provide virion attachment to target cell. This Variola virus (isolate Human/India/Ind3/1967) (VARV) protein is Envelope protein H3 (OPG108).